A 157-amino-acid polypeptide reads, in one-letter code: 2-C-methyl-D-erythritol 2,4-cyclodiphosphate synthase (157 aa).

The a divalent metal cation site is built by Asp8 and His10. Residues 8–10 (DIH) and 34–35 (HS) contribute to the 4-CDP-2-C-methyl-D-erythritol 2-phosphate site. His42 contacts a divalent metal cation. 4-CDP-2-C-methyl-D-erythritol 2-phosphate is bound by residues 56 to 58 (DIG) and 132 to 135 (TTNE).

It belongs to the IspF family. Homotrimer. It depends on a divalent metal cation as a cofactor.

The enzyme catalyses 4-CDP-2-C-methyl-D-erythritol 2-phosphate = 2-C-methyl-D-erythritol 2,4-cyclic diphosphate + CMP. The protein operates within isoprenoid biosynthesis; isopentenyl diphosphate biosynthesis via DXP pathway; isopentenyl diphosphate from 1-deoxy-D-xylulose 5-phosphate: step 4/6. Its function is as follows. Involved in the biosynthesis of isopentenyl diphosphate (IPP) and dimethylallyl diphosphate (DMAPP), two major building blocks of isoprenoid compounds. Catalyzes the conversion of 4-diphosphocytidyl-2-C-methyl-D-erythritol 2-phosphate (CDP-ME2P) to 2-C-methyl-D-erythritol 2,4-cyclodiphosphate (ME-CPP) with a corresponding release of cytidine 5-monophosphate (CMP). The protein is 2-C-methyl-D-erythritol 2,4-cyclodiphosphate synthase of Synechococcus sp. (strain JA-3-3Ab) (Cyanobacteria bacterium Yellowstone A-Prime).